A 204-amino-acid chain; its full sequence is Large ribosomal subunit protein bL25 (204 aa).

It belongs to the bacterial ribosomal protein bL25 family. CTC subfamily. Part of the 50S ribosomal subunit; part of the 5S rRNA/L5/L18/L25 subcomplex. Contacts the 5S rRNA. Binds to the 5S rRNA independently of L5 and L18.

Functionally, this is one of the proteins that binds to the 5S RNA in the ribosome where it forms part of the central protuberance. The chain is Large ribosomal subunit protein bL25 from Rhizobium etli (strain ATCC 51251 / DSM 11541 / JCM 21823 / NBRC 15573 / CFN 42).